The primary structure comprises 746 residues: Polyribonucleotide nucleotidyltransferase (746 aa).

Residues aspartate 515 and aspartate 521 each coordinate Mg(2+). Residues 581-640 (PRVIAVKIPVDKIGEVIGPKGKMINQIQEDTGADISIEDDGTVYIGATNGPSADAARSAI) form the KH domain. The region spanning 652 to 724 (GERYLGTVVK…DRGKLSLSPV (73 aa)) is the S1 motif domain.

It belongs to the polyribonucleotide nucleotidyltransferase family. Mg(2+) is required as a cofactor.

It localises to the cytoplasm. It catalyses the reaction RNA(n+1) + phosphate = RNA(n) + a ribonucleoside 5'-diphosphate. Involved in mRNA degradation. Catalyzes the phosphorolysis of single-stranded polyribonucleotides processively in the 3'- to 5'-direction. In Renibacterium salmoninarum (strain ATCC 33209 / DSM 20767 / JCM 11484 / NBRC 15589 / NCIMB 2235), this protein is Polyribonucleotide nucleotidyltransferase.